We begin with the raw amino-acid sequence, 300 residues long: Ribosomal protein L11 methyltransferase (300 aa).

S-adenosyl-L-methionine is bound by residues Thr147, Gly168, Asp190, and Asn236.

Belongs to the methyltransferase superfamily. PrmA family.

It localises to the cytoplasm. It catalyses the reaction L-lysyl-[protein] + 3 S-adenosyl-L-methionine = N(6),N(6),N(6)-trimethyl-L-lysyl-[protein] + 3 S-adenosyl-L-homocysteine + 3 H(+). Methylates ribosomal protein L11. This is Ribosomal protein L11 methyltransferase from Leptospira borgpetersenii serovar Hardjo-bovis (strain JB197).